A 322-amino-acid chain; its full sequence is Ribosomal RNA small subunit methyltransferase H (322 aa).

Residues 34 to 36 (GGH), Asp59, Phe86, Asp112, and Gln119 contribute to the S-adenosyl-L-methionine site.

Belongs to the methyltransferase superfamily. RsmH family.

It is found in the cytoplasm. The catalysed reaction is cytidine(1402) in 16S rRNA + S-adenosyl-L-methionine = N(4)-methylcytidine(1402) in 16S rRNA + S-adenosyl-L-homocysteine + H(+). Its function is as follows. Specifically methylates the N4 position of cytidine in position 1402 (C1402) of 16S rRNA. The protein is Ribosomal RNA small subunit methyltransferase H of Chlorobium limicola (strain DSM 245 / NBRC 103803 / 6330).